We begin with the raw amino-acid sequence, 35 residues long: Purotoxin-1 (35 aa).

4 disulfide bridges follow: cysteine 3/cysteine 16, cysteine 10/cysteine 21, cysteine 15/cysteine 32, and cysteine 23/cysteine 30.

This sequence belongs to the neurotoxin 33 family. As to expression, expressed by the venom gland.

Its subcellular location is the secreted. Its function is as follows. Inhibits P2RX3 receptors. Has an analgesic effect in rat. Enhances the high-affinity desensitization of P2RX3 purinoceptors. At 50 nM, decreases the IC(50) for ambient ATP from 46.5 nM to 12.7 nM in mouse P2RX3. This is Purotoxin-1 from Alopecosa marikovskyi (Wolf spider).